A 1269-amino-acid chain; its full sequence is Multifunctional 2-oxoglutarate metabolism enzyme (1269 aa).

The segment at 1-41 (MSSSPSPFGQNEWLVEEMYRKFREDPSSVDPSWHEFLVDYN) is 2-oxoglutarate dehydrogenase E1, N-terminal part. Positions 23–37 (REDPSSVDPSWHEFL) are enriched in basic and acidic residues. A disordered region spans residues 23-145 (REDPSSVDPS…AQPADDSDQN (123 aa)). The interval 42 to 107 (PEPTTDSSAS…SKPQAKAKPA (66 aa)) is linker. The span at 43-58 (EPTTDSSASENGQQTR) shows a compositional bias: polar residues. Residues 63 to 75 (KAPPEPAPAPAPK) show a composition bias toward pro residues. Positions 108–378 (ESKSSTKPAD…LRTVHQLLLS (271 aa)) are succinyltransferase E2. Catalysis depends on His357, which acts as the Proton acceptor; for succinyltransferase activity. The tract at residues 379 to 1269 (DDFFDEIFRE…QEILDEAFAP (891 aa)) is 2-oxoglutarate dehydrogenase E1, C-terminal part. Residue Arg583 participates in thiamine diphosphate binding. 2-oxoglutarate contacts are provided by His622 and Ser647. Residues Ser647, Leu649, Asp686, Ala687, Ala688, and Asn719 each coordinate thiamine diphosphate. Asp686 is a Mg(2+) binding site. Asn719 and Ile721 together coordinate Mg(2+). Residues 824-855 (DISMKEAEDALRDYQGQLEQVFNEVRELEKHE) are a coiled coil. His1061 contributes to the 2-oxoglutarate binding site. Acetyl-CoA is bound by residues Thr1079, Arg1095, Lys1130, Ser1133, Gln1183, Arg1190, and Arg1191.

Belongs to the 2-oxoacid dehydrogenase family. Kgd subfamily. As to quaternary structure, homodimer. The 2-oxoglutarate dehydrogenase (ODH) complex contains multiple copies of three enzymatic components: 2-oxoglutarate dehydrogenase (E1), dihydrolipoamide succinyltransferase (E2) and lipoamide dehydrogenase (E3). It depends on Mg(2+) as a cofactor. Thiamine diphosphate serves as cofactor.

It carries out the reaction glyoxylate + 2-oxoglutarate + H(+) = 2-hydroxy-3-oxoadipate + CO2. It catalyses the reaction 2-oxoglutarate + H(+) = succinate semialdehyde + CO2. The catalysed reaction is N(6)-[(R)-lipoyl]-L-lysyl-[protein] + 2-oxoglutarate + H(+) = N(6)-[(R)-S(8)-succinyldihydrolipoyl]-L-lysyl-[protein] + CO2. The enzyme catalyses N(6)-[(R)-dihydrolipoyl]-L-lysyl-[protein] + succinyl-CoA = N(6)-[(R)-S(8)-succinyldihydrolipoyl]-L-lysyl-[protein] + CoA. Its pathway is carbohydrate metabolism; tricarboxylic acid cycle; succinate from 2-oxoglutarate (transferase route): step 1/2. It functions in the pathway carbohydrate metabolism; tricarboxylic acid cycle; succinyl-CoA from 2-oxoglutarate (dehydrogenase route): step 1/1. Its activity is regulated as follows. Alpha-ketoglutarate dehydrogenase and decarboxylase activities are inhibited by unphosphorylated GarA, and allosterically activated by acetyl-CoA, the main substrate of the TCA cycle. In terms of biological role, shows three enzymatic activities that share a first common step, the attack of thiamine-PP on 2-oxoglutarate (alpha-ketoglutarate, KG), leading to the formation of an enamine-thiamine-PP intermediate upon decarboxylation. Thus, displays KGD activity, catalyzing the decarboxylation from five-carbon 2-oxoglutarate to four-carbon succinate semialdehyde (SSA). Also catalyzes C-C bond formation between the activated aldehyde formed after decarboxylation of alpha-ketoglutarate and the carbonyl of glyoxylate (GLX), to yield 2-hydroxy-3-oxoadipate (HOA), which spontaneously decarboxylates to form 5-hydroxylevulinate (HLA). And is also a component of the 2-oxoglutarate dehydrogenase (ODH) complex, that catalyzes the overall conversion of 2-oxoglutarate to succinyl-CoA and CO(2). The KG decarboxylase and KG dehydrogenase reactions provide two alternative, tightly regulated, pathways connecting the oxidative and reductive branches of the TCA cycle. The protein is Multifunctional 2-oxoglutarate metabolism enzyme (kgd) of Mycobacterium sp. (strain KMS).